Reading from the N-terminus, the 463-residue chain is tRNA dimethylallyltransferase 9 (463 aa).

57-64 (GPTGAGKS) serves as a coordination point for ATP. 59–64 (TGAGKS) serves as a coordination point for substrate. Positions 82–85 (DSVQ) are interaction with substrate tRNA.

It belongs to the IPP transferase family. Mg(2+) serves as cofactor. In terms of tissue distribution, expressed ubiquitously, with highest expression in proliferating tissues.

Its subcellular location is the cytoplasm. The catalysed reaction is adenosine(37) in tRNA + dimethylallyl diphosphate = N(6)-dimethylallyladenosine(37) in tRNA + diphosphate. Its function is as follows. Catalyzes the transfer of a dimethylallyl group onto the adenine at position 37 in tRNAs that read codons beginning with uridine, leading to the formation of N6-(dimethylallyl)adenosine (i(6)A). Involved in the cis-type cytokinin biosynthesis. In Arabidopsis thaliana (Mouse-ear cress), this protein is tRNA dimethylallyltransferase 9 (IPT9).